The following is a 239-amino-acid chain: Peptidase E (239 aa).

Catalysis depends on charge relay system residues Ser-122, Asp-137, and His-159.

Belongs to the peptidase S51 family.

Its subcellular location is the cytoplasm. It catalyses the reaction Dipeptidase E catalyzes the hydrolysis of dipeptides Asp-|-Xaa. It does not act on peptides with N-terminal Glu, Asn or Gln, nor does it cleave isoaspartyl peptides.. Hydrolyzes dipeptides containing N-terminal aspartate residues. May play a role in allowing the cell to use peptide aspartate to spare carbon otherwise required for the synthesis of the aspartate family of amino acids. The chain is Peptidase E from Shewanella baltica (strain OS195).